We begin with the raw amino-acid sequence, 110 residues long: UPF0145 protein MTH_507 (110 aa).

The protein belongs to the UPF0145 family.

This chain is UPF0145 protein MTH_507, found in Methanothermobacter thermautotrophicus (strain ATCC 29096 / DSM 1053 / JCM 10044 / NBRC 100330 / Delta H) (Methanobacterium thermoautotrophicum).